A 276-amino-acid chain; its full sequence is MSLRWQAALLDPSLAGGWAVVHCRQQFLVDDSGVLFPRDWLKRLELPLLSEQGLGHFDGEPVFLFELDVPADVPGARWQGLRQFMQQVDPDLFRLLGYATQIGTWVSQHRFCGSCGSPMHARAGERAMYCPACGVQHYPRLSPSMIVLVTRGDELLLARSPRFAPGVYSTLAGYVEPGESVEQCVAREVREEVGVDIHPPQYIASQGWPFPHSLMLGFHAEYAGGEIVPQPEEIEDARWFHIDNLPALPARQSIARYLIELYLARRLGRPEPVLPG.

Substrate is bound at residue Arg-82. Positions 112 and 115 each coordinate Zn(2+). Glu-125 lines the substrate pocket. The Zn(2+) site is built by Cys-130 and Cys-133. Tyr-138 lines the substrate pocket. The Nudix hydrolase domain occupies 139–262; the sequence is PRLSPSMIVL…SIARYLIELY (124 aa). Residues Ala-172, Glu-188, and Glu-192 each coordinate a divalent metal cation. Positions 173–194 match the Nudix box motif; sequence GYVEPGESVEQCVAREVREEVG. 206–213 contributes to the substrate binding site; sequence QGWPFPHS. Glu-233 provides a ligand contact to a divalent metal cation. Ala-255 contributes to the substrate binding site.

Belongs to the Nudix hydrolase family. NudC subfamily. Homodimer. Mg(2+) is required as a cofactor. It depends on Mn(2+) as a cofactor. Zn(2+) serves as cofactor.

It carries out the reaction a 5'-end NAD(+)-phospho-ribonucleoside in mRNA + H2O = a 5'-end phospho-adenosine-phospho-ribonucleoside in mRNA + beta-nicotinamide D-ribonucleotide + 2 H(+). The catalysed reaction is NAD(+) + H2O = beta-nicotinamide D-ribonucleotide + AMP + 2 H(+). It catalyses the reaction NADH + H2O = reduced beta-nicotinamide D-ribonucleotide + AMP + 2 H(+). In terms of biological role, mRNA decapping enzyme that specifically removes the nicotinamide adenine dinucleotide (NAD) cap from a subset of mRNAs by hydrolyzing the diphosphate linkage to produce nicotinamide mononucleotide (NMN) and 5' monophosphate mRNA. The NAD-cap is present at the 5'-end of some mRNAs and stabilizes RNA against 5'-processing. Has preference for mRNAs with a 5'-end purine. Catalyzes the hydrolysis of a broad range of dinucleotide pyrophosphates. This is NAD-capped RNA hydrolase NudC from Stutzerimonas stutzeri (strain A1501) (Pseudomonas stutzeri).